The chain runs to 229 residues: Uracil-DNA glycosylase (229 aa).

D64 functions as the Proton acceptor in the catalytic mechanism.

The protein belongs to the uracil-DNA glycosylase (UDG) superfamily. UNG family.

The protein resides in the cytoplasm. It catalyses the reaction Hydrolyzes single-stranded DNA or mismatched double-stranded DNA and polynucleotides, releasing free uracil.. In terms of biological role, excises uracil residues from the DNA which can arise as a result of misincorporation of dUMP residues by DNA polymerase or due to deamination of cytosine. This Salmonella agona (strain SL483) protein is Uracil-DNA glycosylase.